Consider the following 2625-residue polypeptide: Highly reducing polyketide synthase frbB (2625 aa).

A compositionally biased stretch (basic and acidic residues) spans 1-10 (MRNIDEHMSE). Positions 1–25 (MRNIDEHMSERATLQSSGGYGERDS) are disordered. Residues 27–449 (VEPIAIIGMS…GTNAHVILDR (423 aa)) form the Ketosynthase family 3 (KS3) domain. Catalysis depends on for beta-ketoacyl synthase activity residues C200, H334, and H375. The tract at residues 563-883 (YVFSGQGAQY…DAASTLLTTI (321 aa)) is malonyl-CoA:ACP transacylase (MAT) domain. Residues 942–1080 (HELLGNMSTD…GRIRAVLDDS (139 aa)) form an N-terminal hotdog fold region. The dehydratase (DH) domain stretch occupies residues 942–1252 (HELLGNMSTD…GMILAKLPGG (311 aa)). Residues 942–1255 (HELLGNMSTD…LAKLPGGTSR (314 aa)) enclose the PKS/mFAS DH domain. H974 acts as the Proton acceptor; for dehydratase activity in catalysis. Residues 1102-1255 (VRFVSPSAFY…LAKLPGGTSR (154 aa)) form a C-terminal hotdog fold region. The active-site Proton donor; for dehydratase activity is the D1167. A methyltransferase (CMet) domain region spans residues 1490 to 1673 (YHQIKAYIAE…GFVDTEPVFR (184 aa)). The interval 1907–2220 (GLLETFHWKP…SGKHIGKVIL (314 aa)) is enoyl reductase (ER) domain. The tract at residues 2261 to 2439 (AVYIVVGGLG…GYSINIGPVS (179 aa)) is ketoreductase (KR) domain. In terms of domain architecture, Carrier spans 2542–2619 (GAEAAVLTAI…HLARLAAEES (78 aa)). S2579 is modified (O-(pantetheine 4'-phosphoryl)serine).

The protein operates within antifungal biosynthesis. Its function is as follows. Highly reducing polyketide synthase; part of the gene cluster that mediates the biosynthesis of the antifungal antibiotic FR901469, an inhibitor of beta-1,3-glucansynthase, exerting antifungal activity against the pathogenes Candida albicans and Aspergillus fumigatus. FR901469 is a cyclic depsipeptide containing 12 amino acid residues and a fatty acid chain. The NRPS frbI contains 12 modules responsible for the formation of the depsipeptide backbone which is denoted as Acyl-Thr-Ala-Tyr-Val-4OHPro-Thr-Thr-3OHPro-threo3OHGln-Gly-Thr-Orn-OH (C71H116N14O23). The PKS frbB is probably involved in the production of the hydrocarbon chain, and the acyl-CoA ligase frbC might be involved in the transport of the chain to the peptide ptoduct of frbI. Because FR901469 contains 3 hydroxylated amino acid residues, the 3 oxygenases frbA, frbH, and frbJ might be participating in amino acid hydroxylation. As no thioesterase domains were detected in frbI or frbB, the thioesterases frbD and frbE may instead release and cyclize the products of the NRPS and PKS, respectively. This Dothideomycetidae sp. (strain 11243) (Fungal sp. (strain No.11243)) protein is Highly reducing polyketide synthase frbB.